The sequence spans 714 residues: Phosphoribosylformylglycinamidine synthase subunit PurL (714 aa).

Residue H34 is part of the active site. Y37 serves as a coordination point for ATP. E78 is a binding site for Mg(2+). Substrate contacts are provided by residues 79–82 and R101; that span reads SHNH. Catalysis depends on H80, which acts as the Proton acceptor. Residue D102 coordinates Mg(2+). Q226 is a binding site for substrate. D254 contacts Mg(2+). Residue 298 to 300 participates in substrate binding; that stretch reads ESQ. D474 and G511 together coordinate ATP. Mg(2+) is bound at residue N512. S514 contacts substrate.

The protein belongs to the FGAMS family. Monomer. Part of the FGAM synthase complex composed of 1 PurL, 1 PurQ and 2 PurS subunits.

It localises to the cytoplasm. It catalyses the reaction N(2)-formyl-N(1)-(5-phospho-beta-D-ribosyl)glycinamide + L-glutamine + ATP + H2O = 2-formamido-N(1)-(5-O-phospho-beta-D-ribosyl)acetamidine + L-glutamate + ADP + phosphate + H(+). The protein operates within purine metabolism; IMP biosynthesis via de novo pathway; 5-amino-1-(5-phospho-D-ribosyl)imidazole from N(2)-formyl-N(1)-(5-phospho-D-ribosyl)glycinamide: step 1/2. Its function is as follows. Part of the phosphoribosylformylglycinamidine synthase complex involved in the purines biosynthetic pathway. Catalyzes the ATP-dependent conversion of formylglycinamide ribonucleotide (FGAR) and glutamine to yield formylglycinamidine ribonucleotide (FGAM) and glutamate. The FGAM synthase complex is composed of three subunits. PurQ produces an ammonia molecule by converting glutamine to glutamate. PurL transfers the ammonia molecule to FGAR to form FGAM in an ATP-dependent manner. PurS interacts with PurQ and PurL and is thought to assist in the transfer of the ammonia molecule from PurQ to PurL. This Methanothermobacter thermautotrophicus (strain ATCC 29096 / DSM 1053 / JCM 10044 / NBRC 100330 / Delta H) (Methanobacterium thermoautotrophicum) protein is Phosphoribosylformylglycinamidine synthase subunit PurL.